The primary structure comprises 296 residues: N-acetylmuramic acid 6-phosphate etherase (296 aa).

The 164-residue stretch at 54–217 folds into the SIS domain; it reads VIASFQQGGR…STTAMVGIGK (164 aa). The active-site Proton donor is the Glu82. Glu113 is a catalytic residue.

The protein belongs to the GCKR-like family. MurNAc-6-P etherase subfamily. Homodimer.

The enzyme catalyses N-acetyl-D-muramate 6-phosphate + H2O = N-acetyl-D-glucosamine 6-phosphate + (R)-lactate. Its pathway is amino-sugar metabolism; N-acetylmuramate degradation. Specifically catalyzes the cleavage of the D-lactyl ether substituent of MurNAc 6-phosphate, producing GlcNAc 6-phosphate and D-lactate. This Shouchella clausii (strain KSM-K16) (Alkalihalobacillus clausii) protein is N-acetylmuramic acid 6-phosphate etherase.